The following is a 93-amino-acid chain: Exodeoxyribonuclease 7 small subunit (93 aa).

The disordered stretch occupies residues 1–22; the sequence is MAKTASPGATPPGNGAEPLPDN.

Belongs to the XseB family. As to quaternary structure, heterooligomer composed of large and small subunits.

The protein localises to the cytoplasm. It carries out the reaction Exonucleolytic cleavage in either 5'- to 3'- or 3'- to 5'-direction to yield nucleoside 5'-phosphates.. Functionally, bidirectionally degrades single-stranded DNA into large acid-insoluble oligonucleotides, which are then degraded further into small acid-soluble oligonucleotides. This chain is Exodeoxyribonuclease 7 small subunit, found in Burkholderia multivorans (strain ATCC 17616 / 249).